The sequence spans 810 residues: Transmembrane GTPase Marf (810 aa).

At 1-637 (MAAYLNRTIS…TTTPVEATPV (637 aa)) the chain is on the cytoplasmic side. Position 8 is a phosphothreonine (T8). A disordered region spans residues 13-40 (TGQTGPADDDRHASSTDTVDKSGPGSPL). Positions 20–32 (DDDRHASSTDTVD) are enriched in basic and acidic residues. S38 carries the post-translational modification Phosphoserine. Residues 134–382 (QRDHMKVAFF…IRYFEFQDFE (249 aa)) form the Dynamin-type G domain. The segment at 144–151 (GRTSNGKS) is G1 motif. 147-152 (SNGKSS) is a GTP binding site. The tract at residues 170–171 (TT) is G2 motif. Residues 239–242 (DSPG) form a G3 motif region. 298-301 (NRWD) is a GTP binding site. The G4 motif stretch occupies residues 298-301 (NRWD). Position 327 (K327) is a region of interest, G5 motif. A GTP-binding site is contributed by S345. A coiled-coil region spans residues 427-476 (RNLKQDQKNLLTERIQGTETQMMQVTREMKMKIHNMVEEVEEKVSKALNE). T553 is subject to Phosphothreonine. S554 bears the Phosphoserine mark. T555 carries the phosphothreonine modification. The disordered stretch occupies residues 609–630 (GQPALVNRQSSIGHSVSTPTTT). Residues 638–648 (CLLPAPVVAGI) form a helical membrane-spanning segment. Residues 649–668 (TPEQLSLISRFAVSSIGSQG) are Mitochondrial intermembrane-facing. A helical membrane pass occupies residues 669-689 (TVGGLVVAGVMLKTIGWRVLV). The Cytoplasmic segment spans residues 690-810 (GVGALYGCIY…IFEHNYISPQ (121 aa)). Positions 759–806 (TATTDMNDELKTLDSQLNILEANQKQLKLLRNKANYIQNELDIFEHNY) form a coiled coil.

This sequence belongs to the TRAFAC class dynamin-like GTPase superfamily. Dynamin/Fzo/YdjA family. Mitofusin subfamily. As to quaternary structure, interacts with Mul1. In terms of processing, ubiquitinated by park and Mul1. Ubiquitinated, probably by HUWE1, when dietary stearate (C18:0) levels are low; ubiquitination inhibits mitochondrial fusion. In terms of tissue distribution, widely expressed in embryos, accumulating in the mesoderm and endoderm during gut development. In the male germ line, it is expressed in spermatogonia, spermatocytes and early spermatids.

The protein resides in the mitochondrion outer membrane. It carries out the reaction GTP + H2O = GDP + phosphate + H(+). Mitochondrial outer membrane GTPase that mediates mitochondrial clustering and fusion. Mitochondrial fusion is the physical merging of mitochondria that gives rise to mitochondrial networks, and this process is counterbalanced by mitochondrial fission which fragments networks. Promotes, but is not required for park recruitment to dysfunctional mitochondria. The protein is Transmembrane GTPase Marf (Marf) of Drosophila melanogaster (Fruit fly).